Consider the following 365-residue polypeptide: Serpentine receptor class epsilon-21 (365 aa).

7 helical membrane passes run 49–69 (ILIN…VFCI), 82–102 (IIIS…FVFI), 116–136 (LLFW…HTLL), 158–178 (VWIA…YAFL), 189–209 (IFIV…IIYF), 250–270 (VVVV…PIIL), and 292–314 (PLVV…LSYY).

This sequence belongs to the nematode receptor-like protein sre family.

The protein localises to the membrane. The polypeptide is Serpentine receptor class epsilon-21 (sre-21) (Caenorhabditis elegans).